The sequence spans 100 residues: NADH-quinone oxidoreductase subunit K (100 aa).

Transmembrane regions (helical) follow at residues 1–21, 28–48, and 64–84; these read MIGL…GLAG, ILLL…GFVA, and FIIS…ILWF.

Belongs to the complex I subunit 4L family. As to quaternary structure, NDH-1 is composed of 14 different subunits. Subunits NuoA, H, J, K, L, M, N constitute the membrane sector of the complex.

It localises to the cell inner membrane. The catalysed reaction is a quinone + NADH + 5 H(+)(in) = a quinol + NAD(+) + 4 H(+)(out). In terms of biological role, NDH-1 shuttles electrons from NADH, via FMN and iron-sulfur (Fe-S) centers, to quinones in the respiratory chain. The immediate electron acceptor for the enzyme in this species is believed to be ubiquinone. Couples the redox reaction to proton translocation (for every two electrons transferred, four hydrogen ions are translocated across the cytoplasmic membrane), and thus conserves the redox energy in a proton gradient. This chain is NADH-quinone oxidoreductase subunit K, found in Helicobacter pylori (strain ATCC 700392 / 26695) (Campylobacter pylori).